We begin with the raw amino-acid sequence, 152 residues long: Ribosome maturation factor RimP (152 aa).

This sequence belongs to the RimP family.

Its subcellular location is the cytoplasm. In terms of biological role, required for maturation of 30S ribosomal subunits. The polypeptide is Ribosome maturation factor RimP (Aeromonas salmonicida (strain A449)).